Consider the following 411-residue polypeptide: LL-diaminopimelate aminotransferase (411 aa).

2 residues coordinate substrate: Tyr-15 and Gly-42. Pyridoxal 5'-phosphate-binding positions include Tyr-72, 108-109 (SK), Tyr-132, Asn-187, Tyr-218, and 246-248 (SFS). 3 residues coordinate substrate: Lys-109, Tyr-132, and Asn-187. An N6-(pyridoxal phosphate)lysine modification is found at Lys-249. Arg-257 and Asn-292 together coordinate pyridoxal 5'-phosphate. 2 residues coordinate substrate: Asn-292 and Arg-388.

This sequence belongs to the class-I pyridoxal-phosphate-dependent aminotransferase family. LL-diaminopimelate aminotransferase subfamily. Homodimer. Pyridoxal 5'-phosphate is required as a cofactor.

The enzyme catalyses (2S,6S)-2,6-diaminopimelate + 2-oxoglutarate = (S)-2,3,4,5-tetrahydrodipicolinate + L-glutamate + H2O + H(+). Its pathway is amino-acid biosynthesis; L-lysine biosynthesis via DAP pathway; LL-2,6-diaminopimelate from (S)-tetrahydrodipicolinate (aminotransferase route): step 1/1. Involved in the synthesis of meso-diaminopimelate (m-DAP or DL-DAP), required for both lysine and peptidoglycan biosynthesis. Catalyzes the direct conversion of tetrahydrodipicolinate to LL-diaminopimelate. In Citrifermentans bemidjiense (strain ATCC BAA-1014 / DSM 16622 / JCM 12645 / Bem) (Geobacter bemidjiensis), this protein is LL-diaminopimelate aminotransferase.